Consider the following 191-residue polypeptide: Small ribosomal subunit protein uS9c (191 aa).

A disordered region spans residues 166-191 (TQDSRVKERRKYGLKKARKASQYHKR). Over residues 172-191 (KERRKYGLKKARKASQYHKR) the composition is skewed to basic residues.

The protein belongs to the universal ribosomal protein uS9 family.

The protein resides in the plastid. Its subcellular location is the chloroplast. In Chlamydomonas reinhardtii (Chlamydomonas smithii), this protein is Small ribosomal subunit protein uS9c (rps9).